The sequence spans 412 residues: UPF0754 membrane protein syc0451_d (412 aa).

A run of 2 helical transmembrane segments spans residues 8–28 (LWLL…DLAI) and 390–410 (IGGV…VWSL).

This sequence belongs to the UPF0754 family.

It localises to the cell inner membrane. This chain is UPF0754 membrane protein syc0451_d, found in Synechococcus sp. (strain ATCC 27144 / PCC 6301 / SAUG 1402/1) (Anacystis nidulans).